We begin with the raw amino-acid sequence, 994 residues long: Regulator of telomere elongation helicase 1 homolog (994 aa).

The Helicase ATP-binding domain occupies 7 to 316 (AGIPVHFPFE…DDLMLLKEML (310 aa)). 42–49 (SPTGTGKT) lines the ATP pocket. [4Fe-4S] cluster is bound by residues C146, C164, C173, and C209. Positions 252-255 (DEAH) match the DEAH box motif. Residues 861-887 (SSGLVKIHKRERSSPPGSSQSSSQTAK) form a disordered region. Low complexity predominate over residues 874–884 (SPPGSSQSSSQ).

Belongs to the helicase family. RAD3/XPD subfamily.

The protein localises to the nucleus. It carries out the reaction ATP + H2O = ADP + phosphate + H(+). Its function is as follows. A probable ATP-dependent DNA helicase implicated in DNA repair and the maintenance of genomic stability. Acts as an anti-recombinase to counteract toxic recombination and limit crossover during meiosis. Regulates meiotic recombination and crossover homeostasis by physically dissociating strand invasion events and thereby promotes noncrossover repair by meiotic synthesis dependent strand annealing (SDSA) as well as disassembly of D loop recombination intermediates. The polypeptide is Regulator of telomere elongation helicase 1 homolog (Drosophila ananassae (Fruit fly)).